A 361-amino-acid polypeptide reads, in one-letter code: G kinase-anchoring protein 1-A (361 aa).

Disordered stretches follow at residues 22–111 (DSSS…EDWQ) and 140–183 (FEES…KDFQ). A compositionally biased stretch (low complexity) spans 35–48 (AHSSGKAHSGSAAR). Residues 51–79 (NKGNEKKKEKRRKKKEQQQSEANELRNLA) are a coiled coil. The span at 158–168 (KVNKKDKRKNN) shows a compositional bias: basic residues. Coiled-coil stretches lie at residues 246 to 296 (KDGR…QEGE) and 326 to 346 (AALE…VKYQ).

The protein belongs to the GKAP1 family.

The protein resides in the golgi apparatus. Functionally, may play a role in the regulation of insulin-dependent IRS1 tyrosine phosphorylation in adipocytes. The protein is G kinase-anchoring protein 1-A (gkap1-a) of Xenopus laevis (African clawed frog).